The sequence spans 343 residues: MTGCSAPAETSGSRKMVDPFGRNISYLRVSVTDRCDLRCFYCMSEDMTFLPKADLLTLEELDRLCSAFIAKGVRKLRLTGGEPLVRRNVMSLIRSLSRHLQSGALKELTLTTNGSQLVRFANELKDCGVKRINVSLDTLDPARFREITRWGDIQKVMAGIDAAQAAGLAVKINAVALKNLNEDEIPSLMEWAHSRDMALTLIEVMPMGDIGASRADQYLPLSMLRARLEGQYTLTDLDDSTGGPARYVRVSETGGKLGFITPMTHNFCESCNRVRITCTGTLHTCLGHEDASDLRRPLRASPTDELLYETIDRAIGLKPKGHDFIIDRHNRPSVSRHMSVTGG.

The Radical SAM core domain maps to P19–P244. R28 contacts GTP. [4Fe-4S] cluster is bound by residues C35 and C39. Y41 is a binding site for S-adenosyl-L-methionine. C42 is a binding site for [4Fe-4S] cluster. R77 provides a ligand contact to GTP. Residue G81 participates in S-adenosyl-L-methionine binding. T111 contacts GTP. S135 is an S-adenosyl-L-methionine binding site. K171 lines the GTP pocket. M205 serves as a coordination point for S-adenosyl-L-methionine. [4Fe-4S] cluster is bound by residues C268 and C271. Residue R273–R275 coordinates GTP. C285 contributes to the [4Fe-4S] cluster binding site.

It belongs to the radical SAM superfamily. MoaA family. In terms of assembly, monomer and homodimer. The cofactor is [4Fe-4S] cluster.

The catalysed reaction is GTP + AH2 + S-adenosyl-L-methionine = (8S)-3',8-cyclo-7,8-dihydroguanosine 5'-triphosphate + 5'-deoxyadenosine + L-methionine + A + H(+). Its pathway is cofactor biosynthesis; molybdopterin biosynthesis. In terms of biological role, catalyzes the cyclization of GTP to (8S)-3',8-cyclo-7,8-dihydroguanosine 5'-triphosphate. This chain is GTP 3',8-cyclase, found in Nitrobacter winogradskyi (strain ATCC 25391 / DSM 10237 / CIP 104748 / NCIMB 11846 / Nb-255).